A 76-amino-acid chain; its full sequence is Conotoxin ArMLCL-022 (76 aa).

Positions 1–19 (MLCLPVFIILLLLASTAAS) are cleaved as a signal peptide. The propeptide occupies 20–52 (NPLETRIQSDLIRAALEDADMKTERGFLGVLMK).

The protein belongs to the conotoxin T superfamily. As to expression, expressed by the venom duct.

It is found in the secreted. This is Conotoxin ArMLCL-022 from Conus arenatus (Sand-dusted cone).